A 578-amino-acid polypeptide reads, in one-letter code: Rhamnogalacturonate lyase (578 aa).

The N-terminal stretch at 1–27 (MHMNKPLQAWRTPLLTLIFVLPLTATG) is a signal peptide.

The protein belongs to the polysaccharide lyase 4 family.

It localises to the secreted. It carries out the reaction Endotype eliminative cleavage of L-alpha-rhamnopyranosyl-(1-&gt;4)-alpha-D-galactopyranosyluronic acid bonds of rhamnogalacturonan I domains in ramified hairy regions of pectin leaving L-rhamnopyranose at the reducing end and 4-deoxy-4,5-unsaturated D-galactopyranosyluronic acid at the non-reducing end.. Degrades the rhamnogalacturonan I (RG-I) backbone of pectin. Is required for the full virulence of E.chrysanthemi strain 3937 as it is involved in rotting of plant tissue. This Dickeya dadantii (strain 3937) (Erwinia chrysanthemi (strain 3937)) protein is Rhamnogalacturonate lyase (rhiE).